A 100-amino-acid chain; its full sequence is Spleen trypsin inhibitor I (100 aa).

A signal peptide spans 1-21 (MKMSRLCLSIALLVLLGTLAA). Positions 22-33 (STPGCDTSNQAK) are excised as a propeptide. Residues 40-90 (CLEPPYTGPCKAKMIRYFYNAKAGFCETFVYGGCKAKSNNFRSAEDCMRTC) form the BPTI/Kunitz inhibitor domain. Intrachain disulfides connect C40-C90, C49-C73, and C65-C86. A propeptide is located at residue L100.

It localises to the secreted. The protein is Spleen trypsin inhibitor I of Bos taurus (Bovine).